The sequence spans 261 residues: Protein TfpB (261 aa).

In Moraxella bovis, this protein is Protein TfpB (tfpB).